Reading from the N-terminus, the 90-residue chain is Small ribosomal subunit protein bS20 (90 aa).

A disordered region spans residues 1 to 21 (MANHKSALKRVRQTKKRTERN).

This sequence belongs to the bacterial ribosomal protein bS20 family.

Binds directly to 16S ribosomal RNA. In Nitratiruptor sp. (strain SB155-2), this protein is Small ribosomal subunit protein bS20.